The primary structure comprises 163 residues: Phosphopantetheine adenylyltransferase (163 aa).

Ser-11 contributes to the substrate binding site. ATP is bound by residues 11–12 and His-19; that span reads SF. 3 residues coordinate substrate: Lys-43, Leu-75, and Arg-89. Residues 90 to 92, Glu-100, and 125 to 131 each bind ATP; these read GLR and YSFLSSS.

Belongs to the bacterial CoaD family. In terms of assembly, homohexamer. The cofactor is Mg(2+).

The protein localises to the cytoplasm. It catalyses the reaction (R)-4'-phosphopantetheine + ATP + H(+) = 3'-dephospho-CoA + diphosphate. The protein operates within cofactor biosynthesis; coenzyme A biosynthesis; CoA from (R)-pantothenate: step 4/5. Functionally, reversibly transfers an adenylyl group from ATP to 4'-phosphopantetheine, yielding dephospho-CoA (dPCoA) and pyrophosphate. This chain is Phosphopantetheine adenylyltransferase, found in Lysinibacillus sphaericus (strain C3-41).